The primary structure comprises 352 residues: Small glutamine-rich tetratricopeptide repeat-containing protein 2 (352 aa).

Residues 80–97 (PAAASSSSTAPAAAAATP) show a composition bias toward low complexity. The disordered stretch occupies residues 80 to 103 (PAAASSSSTAPAAAAATPSDEDLA). TPR repeat units follow at residues 105 to 138 (AEQL…NPNS), 140 to 172 (VYFS…DPKF), and 173 to 206 (GKAY…DPSN). Residues 217-236 (KEQLSSSSSSNANDATASRG) form a disordered region.

This sequence belongs to the SGT family.

Functionally, co-chaperone that binds to the molecular chaperone Hsp70 and regulates Hsp70 ATPase activity. This is Small glutamine-rich tetratricopeptide repeat-containing protein 2 from Mycosarcoma maydis (Corn smut fungus).